The chain runs to 271 residues: Ribosomal RNA small subunit methyltransferase A (271 aa).

Residues His-11, Leu-13, Gly-38, Glu-58, Asp-86, and Asn-101 each coordinate S-adenosyl-L-methionine.

The protein belongs to the class I-like SAM-binding methyltransferase superfamily. rRNA adenine N(6)-methyltransferase family. RsmA subfamily.

Its subcellular location is the cytoplasm. The catalysed reaction is adenosine(1518)/adenosine(1519) in 16S rRNA + 4 S-adenosyl-L-methionine = N(6)-dimethyladenosine(1518)/N(6)-dimethyladenosine(1519) in 16S rRNA + 4 S-adenosyl-L-homocysteine + 4 H(+). In terms of biological role, specifically dimethylates two adjacent adenosines (A1518 and A1519) in the loop of a conserved hairpin near the 3'-end of 16S rRNA in the 30S particle. May play a critical role in biogenesis of 30S subunits. In Helicobacter pylori (strain J99 / ATCC 700824) (Campylobacter pylori J99), this protein is Ribosomal RNA small subunit methyltransferase A.